The chain runs to 68 residues: Conotoxin mr3g (68 aa).

The first 19 residues, 1 to 19, serve as a signal peptide directing secretion; the sequence is MSKLGVLLTICLLLFALTA. Residues 20–51 constitute a propeptide that is removed on maturation; that stretch reads VPLDGDQPADRPAERMQDDISSERHPMFDAVR. 3 disulfides stabilise this stretch: Cys53–Cys67, Cys54–Cys63, and Cys59–Cys66. Pro55 and Pro65 each carry 4-hydroxyproline. Cys67 bears the Cysteine amide mark.

Expressed by the venom duct.

The protein localises to the secreted. Its function is as follows. Intracranially injection into mice does not elicit symptoms. This chain is Conotoxin mr3g, found in Conus marmoreus (Marble cone).